Here is a 178-residue protein sequence, read N- to C-terminus: GTP-dependent dephospho-CoA kinase (178 aa).

The GTP site is built by Asp43, Ile44, Val45, Asp62, Lys64, and Glu120.

Belongs to the GTP-dependent DPCK family.

It catalyses the reaction 3'-dephospho-CoA + GTP = GDP + CoA + H(+). Its pathway is cofactor biosynthesis; coenzyme A biosynthesis. Functionally, catalyzes the GTP-dependent phosphorylation of the 3'-hydroxyl group of dephosphocoenzyme A to form coenzyme A (CoA). The sequence is that of GTP-dependent dephospho-CoA kinase from Natronomonas pharaonis (strain ATCC 35678 / DSM 2160 / CIP 103997 / JCM 8858 / NBRC 14720 / NCIMB 2260 / Gabara) (Halobacterium pharaonis).